We begin with the raw amino-acid sequence, 230 residues long: Ethylene-responsive transcription factor ERF012 (230 aa).

Residues 1–17 (MVKQERKIQTSSTKKEM) are compositionally biased toward basic and acidic residues. The tract at residues 1 to 51 (MVKQERKIQTSSTKKEMPLSSSPSSSSSSSSSSSSSSCKNKNKKSKIKKYK) is disordered. Low complexity predominate over residues 20-39 (SSSPSSSSSSSSSSSSSSCK). The segment covering 40–51 (NKNKKSKIKKYK) has biased composition (basic residues). Residues 49-106 (KYKGVRMRSWGSWVSEIRAPNQKTRIWLGSYSTAEAAARAYDVALLCLKGPQANLNFP) constitute a DNA-binding region (AP2/ERF).

It belongs to the AP2/ERF transcription factor family. ERF subfamily. Expressed cotyledons, ovules and seeds of immature siliques.

It is found in the nucleus. Functionally, transcriptional activator involved in the regulation of plant development and tolerance to abiotic stresses. Involved in salt and osmotic stress response pathways. May be regulated by the stress-related genes RD29A, RD22, DREB1A or P5CS during stress response. Binds to the GCC-box pathogenesis-related promoter element. May be involved in the regulation of gene expression by stress factors and by components of stress signal transduction pathways. The sequence is that of Ethylene-responsive transcription factor ERF012 (ERF012) from Arabidopsis thaliana (Mouse-ear cress).